The primary structure comprises 356 residues: MQRADFHFDLPDELIARYPSETRSDCRLLCLDDATGDIAHRRFTDLLTLLAPGDLLVFNDTRVIPARLFGQKASGGRVEMLLERPLDAHRGLAHLRASKAPRPGTELIFEGDVHAVVEARHDALFELRFLGETPMIELLENHGHMPLPPYIDREDELDDRERYQTVYARREGAVAAPTAGLHFDTPLMEALRERGVEMGYVTLHVGAGTFQPVRVDDIREHHMHSEWLEVDETLCRQVEATRARGGRVIAVGTTSVRCLETASQGQEDGHIAPFRGDTDIFIYPGYQWRCVDALITNFHLPESTLLMLVSAFAGYPQVMRAYRAAVAERYAFFSYGDAMFLNRSASSHPFPENSHA.

The protein belongs to the QueA family. As to quaternary structure, monomer.

The protein localises to the cytoplasm. It carries out the reaction 7-aminomethyl-7-carbaguanosine(34) in tRNA + S-adenosyl-L-methionine = epoxyqueuosine(34) in tRNA + adenine + L-methionine + 2 H(+). The protein operates within tRNA modification; tRNA-queuosine biosynthesis. Functionally, transfers and isomerizes the ribose moiety from AdoMet to the 7-aminomethyl group of 7-deazaguanine (preQ1-tRNA) to give epoxyqueuosine (oQ-tRNA). The protein is S-adenosylmethionine:tRNA ribosyltransferase-isomerase of Chromohalobacter salexigens (strain ATCC BAA-138 / DSM 3043 / CIP 106854 / NCIMB 13768 / 1H11).